Consider the following 3095-residue polypeptide: MDLIRGLDILSASPIDTEDQNLRKEKIEACRTISEQICAPSLRNTADFPRFLSIAISLLLRAHGDKDLNVYSVAEESLNRTIKILVYSYHERILFELFKVLKGKPHQHNNEKRLSTNLTDHLSQNSVTPSVPTTPNYQQSPSTQSPSHSTSNSSNNLYNNFSSNSNSNSNSNSNSSSNNNSGNTTPGNNTNNSNGNANSIFNTANQILSKPFPLKSQRIALIKFGEICSFIRPSKCRKYILSLVPPINSLLSIIEDESLQESISISMENISKILIPYLKENEVHQLIDLFSRNLQQPSAAVRRAASLSITSICRYHPRPLFEFTIEFLYNFTFPNSPPISSITSASCIPASSNTNTLQNSKILGVLFSYLQLIKLAEELSSNDIKILDGFSLKIQFFVHFILKYIQVPIDGEPYDHNIVGLSLELLQQLLVTFGPYEYSWPKPLVREVIAQLRHLCFNQQSSIRVSLKAVVLNCLAQSVKFFPKLFNDEFFKHQPSTIDSNTVTSAEDHICRDYLLNISPSDLNFKLFTPITQQQQQQQQQQQQQQQQQQQHNLTSSTMSGINSTTGVSNHTFSLEPKEEFLYYLNDSDPLLRGGTALMIGCLIRGYLETDHITSNQIYPTNIALLEDNLSIPTLLIFLLRALMDSSSITAKLACTGISECLPILSQSKFSDWALVTLRHLLCVSSSTYWLVKLEILETLSMIDYIVIEYLEQNIQQKSNVMNVVINGPNLSISTSSIKINENNNNSNNSNNNKNNSETGGAVAIPIQSKVLDFLIEQLSDNDFRVRNSAGKSLVRVIPKLVFTAPLERHSMKGISSKVRETFDVQDYENTVLRKRKIFANLSHVIGLLVNQLSNPHPDDKIRGCYGALNLICKTYSFPPDTPEQCRTLSSVLANPMLSFVGDILPLALDRVGLTWVATDFDVHIDIIEILGYLSRGAENVLGTYCHNVLRHIVRIINIATNIIQFRPTPPLKEVKSNPSGIHVNSPLLKAPTHLGSFTHSIHYIKLYSKLLTARINSITIFGIDRFSQLRQACFETLSVMLKCAGKTILPYTEEIIGYLTTHFEQEPVSVIKCINELFLVTMKPTPIVSISSLSQKSRDLNIGGGFISTGGGGGGGSGGINSSSSSLKQYEPRSIESHSSSSNSHDEMFLNSRSVFSSLLTFGTPNLKQHYDFINEVPSSHNINYSYSNSEINRIISNEDRKLNFKLFEPLIIGSMIEYQTTHSHELKIAILLMLSKLSKFGLDLSLFDKENHFPTYFIEELKETHCLLSKPNQVLSYSYDLLGSMFIYRKLFPDSSVSIDDIKKLFFQPPPQQQQQTNQNKSQSLNSTPNISSNNNNNNNNNNNNNNNNNNNNNNNSNSSQSLNNSTVIGNNSSHPYSYTIPTIIENCHSFVRYLYDPNDKYPDTDFRERFLSFLLSNLQYSQTIDILILIVTIVQPNSTLHQKFSQQISHQLFTNLSLGDSPFFIINSIEEVERLYVLIDKLHSSSLSAARWADALLSVSPQFVNKSTSSSSSSSSTATSPSSSSSSTTTTTTTSTNTTTTTPSDPLIRKRILLLRESILEAYELRWLPPLLVLLRTGCKLPEEARISAARQSRFLSNHDNKHQPGPSAAIISTLLLKLIRNAVSVFSLYKPKNVLFTQLINHLLYYSSIFFNKNLVPHISAQSLSNSPNFGATNTTTGSGSVSPLSSSSSSTITVTTMAMGSSLMKQPSSSLLLSPTVGGSSSTINLFMDSLKGILALDNGTIIQEITTSLLSYGGTSTSIHAVKLLLLLGRLPNQQVIEGADLVWKQYALSNNWQSCGCEHFLTHHIIFLLYCQSIVVLKSQNIELSETFLDKIVLLINESTVKKLIEFLVKGGSNSDQNQYIEIFTQHLVKIFSRVSNSLDLRKKQKLLRLLSYLPANRETLELLIVNFLQTDDISLQVSGERILNLNINNLIETYGPQNSLEIIQELYQIFMSNFVKSTTNQSVQSLFLKLIKNLSPSSAYQGITPTHNNVIEKLKEKELTNNNNNNNNNIIEKEEEEKEKEKEKVKEEEEGNNIEKLIQLQIETIKKNNQISDLKTVPWDYFVELIKSRYYSNNLNQHSFNNISILSQIDKDATISLLESKSLDGTLLPAFISSVYSLEFQDEIQAYLLKKVDTLLGLAGEIGTDPLKGGPPFLSDSVWDELRETTRCLSNFINKFGLGELCESKLLKVSTWAFIESFRRWRAEIINPYDFKLVLELSRSIILKSTASILTITDDSEWCSLLLCLYKLYCLVIRPHFGYISGQRELEENFSQDPTQISLTQSNEMIKFLVSLLTNVKSYTPMPGSHIGQLIFDSFIRAIIPLSTKAFDFIYPTVSTSSEDEFGGGIIPNCPIFSSNVSPEQNIKALVSFIHFVDIDDEFKFKQIWEMLEPIFVSPLGDAEMGSDEITEECKCLSLSGMATMIIKVCFEVTGVNSQVNLLETSTIPKSTYNHIPREKDLMFLNTPTGKKLNHLLSTIYGDMPQSELPLGGAIESVSSSSSMFGESSGNHQNMSSSSLSAYHFNIERSFSSNQFGSDQISLSDLRLFKTPYFIGVNFTPIIQKLLESFESFLVNPMCPPMLKKDILKSTVLLSDLFNREQVIWMFKTFTTIYAQDEIDDFLLKQHLILGICKGIAILQTPPNVGDSNAHSVGIFEMLKSALDHQNISLQVSALDGILYLLEGKVNKYIQGSLLQFLFRWIPTRLSSVPFPPVSLTLRVLATMFLMIEQYSREAEETLFTKRAVTTCIQLGQQQSTPVPIVYGVFRGLDRLLVSFSLSHSQRELISHFSLKSLPSENPIRSLLALGLMVTCIYTGDETGINSPSFTKSSISSIGSGGVNSLTAFEGSFSSSSIESPLNSALDSVMSSFIMDDNYSGSGGNSLINGGGGGDPLSSLDRQKFSRVNNMEKVKMLFDKIRLVSHFSYESHVLSEVLPVVIVDLFPSVDQVLSFILGEFLKQSKTNSKLMCQIISKVFDFLVENDTSENTNQHLINYWIIICLQNFFQIQNPTHCLWALTYLFLTSSPKRSFKLLESEFASKIQTNEKLFIIIASEFYFNKELSKENKQLFKDSFSKLKIEPYISLLKVINTTQ.

Disordered stretches follow at residues 105 to 197 (PHQH…NGNA), 536 to 561 (QQQQ…TMSG), 1312 to 1371 (PPQQ…STVI), 1509 to 1547 (KSTS…TTPS), and 2005 to 2037 (KELT…KEEE). The segment covering 115-139 (STNLTDHLSQNSVTPSVPTTPNYQQ) has biased composition (polar residues). Low complexity-rich tracts occupy residues 140 to 197 (SPST…NGNA) and 536 to 551 (QQQQ…QQQQ). Residues 552 to 561 (HNLTSSTMSG) show a composition bias toward polar residues. Composition is skewed to low complexity over residues 1315 to 1368 (QQQQ…LNNS), 1510 to 1547 (STSS…TTPS), and 2008 to 2018 (TNNNNNNNNNI).

This sequence belongs to the huntingtin family.

It is found in the cytoplasm. The protein localises to the nucleus. Its function is as follows. May play a role in microtubule-mediated transport or vesicle function. The polypeptide is HD protein homolog (htt) (Dictyostelium discoideum (Social amoeba)).